A 212-amino-acid polypeptide reads, in one-letter code: Thymidylate kinase (212 aa).

10–17 (GPEGAGKT) contacts ATP.

It belongs to the thymidylate kinase family.

It carries out the reaction dTMP + ATP = dTDP + ADP. In terms of biological role, phosphorylation of dTMP to form dTDP in both de novo and salvage pathways of dTTP synthesis. The chain is Thymidylate kinase from Bacillus velezensis (strain DSM 23117 / BGSC 10A6 / LMG 26770 / FZB42) (Bacillus amyloliquefaciens subsp. plantarum).